Consider the following 333-residue polypeptide: Serine racemase (333 aa).

Glu-13 contributes to the Mg(2+) binding site. ATP is bound by residues Ser-31, Ser-32, Ile-33, Lys-51, and Thr-52. The active-site Proton acceptor is the Lys-56. The residue at position 56 (Lys-56) is an N6-(pyridoxal phosphate)lysine. Residue Pro-69 coordinates Ca(2+). The residue at position 71 (Thr-71) is a Phosphothreonine. Position 81 (Thr-81) interacts with Ca(2+). Ser-84 functions as the Proton acceptor in the catalytic mechanism. Residue Asn-86 participates in pyridoxal 5'-phosphate binding. Residue Gln-89 coordinates ATP. S-nitrosocysteine is present on Cys-113. Position 121 (Tyr-121) interacts with ATP. A pyridoxal 5'-phosphate-binding site is contributed by Asn-154. Residue Asp-178 participates in Mg(2+) binding. Pyridoxal 5'-phosphate contacts are provided by Gly-185, Gly-186, Gly-187, Gly-188, and Met-189. Glu-210, Ala-214, Asp-216, and Asn-247 together coordinate Mg(2+). Residues Glu-210, Ala-214, Asp-216, and Asn-247 each coordinate Ca(2+). Residues Glu-210, Ala-214, and Asp-216 each contribute to the Mn(2+) site. Residue Lys-279 participates in ATP binding. A pyridoxal 5'-phosphate-binding site is contributed by Ser-313. Residue Asn-316 coordinates ATP.

It belongs to the serine/threonine dehydratase family. In terms of assembly, homodimer. It depends on Mg(2+) as a cofactor. Mn(2+) is required as a cofactor. The cofactor is Ca(2+). Pyridoxal 5'-phosphate serves as cofactor. In terms of processing, S-nitrosylated, leading to decrease the enzyme activity. As to expression, expressed in the cerebellum and frontal cortex (at protein level).

It catalyses the reaction L-serine = D-serine. The catalysed reaction is D-serine = pyruvate + NH4(+). It carries out the reaction L-serine = pyruvate + NH4(+). Its activity is regulated as follows. Allosterically activated by magnesium, and possibly also other divalent metal cations. Allosterically activated by ATP, ADP or GTP. Competitively inhibited by malonate. In terms of biological role, catalyzes the synthesis of D-serine from L-serine. D-serine is a key coagonist with glutamate at NMDA receptors. Has dehydratase activity towards both L-serine and D-serine. This is Serine racemase (Srr) from Rattus norvegicus (Rat).